We begin with the raw amino-acid sequence, 535 residues long: Succinate-semialdehyde dehydrogenase, mitochondrial (535 aa).

The transit peptide at 1 to 47 (MATCIWLRSCGARRLGWTFPGCRLRPRAGGLVPASGPAPGPAQLRCY) directs the protein to the mitochondrion. Lys126 is subject to N6-acetyllysine; alternate. Lys126 is subject to N6-succinyllysine; alternate. N6-succinyllysine occurs at positions 135 and 184. Residues Arg213 and 228–231 (KPAE) contribute to the NAD(+) site. Arg213 contributes to the substrate binding site. An N6-acetyllysine; alternate modification is found at Lys265. Residue Lys265 is modified to N6-succinyllysine; alternate. Residue 284-289 (GSTTTG) coordinates NAD(+). Glu306 functions as the Proton acceptor in the catalytic mechanism. Arg334 contributes to the substrate binding site. Cys340 functions as the Nucleophile in the catalytic mechanism. The cysteines at positions 340 and 342 are disulfide-linked. At Lys365 the chain carries N6-acetyllysine. An N6-succinyllysine modification is found at Lys402. Lys411 carries the post-translational modification N6-acetyllysine. Residue Ser498 participates in substrate binding. Ser499 bears the Phosphoserine mark.

Belongs to the aldehyde dehydrogenase family. Homotetramer.

It is found in the mitochondrion. It catalyses the reaction succinate semialdehyde + NAD(+) + H2O = succinate + NADH + 2 H(+). It functions in the pathway amino-acid degradation; 4-aminobutanoate degradation. Its activity is regulated as follows. Redox-regulated. Inhibited under oxydizing conditions. Catalyzes one step in the degradation of the inhibitory neurotransmitter gamma-aminobutyric acid (GABA). The polypeptide is Succinate-semialdehyde dehydrogenase, mitochondrial (ALDH5A1) (Pan paniscus (Pygmy chimpanzee)).